The following is a 589-amino-acid chain: Protein MICRORCHIDIA 3 (589 aa).

Positions 1 to 33 (MAPESKNAGVSVVVNLDSDSDSDNDDGVGGRGA) are disordered. Residues 542–589 (MRCEEYVKKETELEQTVSNLAKELEETKSKCARLALLVDAKRREMQQV) are a coiled coil.

It belongs to the MORC ATPase protein family. As to quaternary structure, homodimer and heterodimer. Component of an RNA-directed DNA methylation (RdDM) complex. The cofactor is Mg(2+). It depends on Mn(2+) as a cofactor.

It localises to the nucleus. Exhibits ATPase activity. Binds DNA/RNA in a non-specific manner and exhibits endonuclease activity. Probably involved in DNA repair. Involved in RNA-directed DNA methylation (RdDM) as a component of the RdDM machinery and required for gene silencing. May also be involved in the regulation of chromatin architecture to maintain gene silencing. This chain is Protein MICRORCHIDIA 3, found in Arabidopsis thaliana (Mouse-ear cress).